The sequence spans 317 residues: MIIRFGYVSHATALWDCSPAKTMTFTSWKKLKKQEREDKLYNVTLQNLEHTIRILHYNIAHEIPLYRLSSSIVPLATHPEVEFDYIQIFAPLWRKIGALIQEHNLRVSFHPNQFTLFTSDKPHITTNAITDMTYHYNVLNAMGIADSSYINIHVGGAYGNKEKAIERFHENIQKLPYHIKRQMTLENDDKTYTTSETLAICQKEKIPFVFDYHHHIANLCNEPLEELLPMIFKTWSHTNVLPKVHISSPRSEKEFRAHADYIDLEFIKPFLHITKKINHNFDIMIESKQKDLAMLQLICELSSIRGIKRINSATLQW.

It belongs to the uve1/UvsE family.

Component in a DNA repair pathway. Removal of UV LIGHT damaged nucleotides. Recognizes pyrimidine dimers and cleave a phosphodiester bond immediately 5' to the lesion. The protein is UV DNA damage endonuclease of Bacillus mycoides (strain KBAB4) (Bacillus weihenstephanensis).